The following is a 499-amino-acid chain: Endoglucanase (499 aa).

A signal peptide spans 1-29 (MKRSISIFITCLLITLLTMGGMLASPASA). Residues H65, 69-70 (WY), Y96, and H131 contribute to the substrate site. E169 acts as the Proton donor in catalysis. Y231 provides a ligand contact to substrate. E257 functions as the Nucleophile in the catalytic mechanism. Substrate is bound by residues 263–264 (AS), W291, and 296–298 (KQE). A CBM3 domain is found at 350–499 (QENGISVQYR…GKLIWGTEPN (150 aa)).

This sequence belongs to the glycosyl hydrolase 5 (cellulase A) family.

The enzyme catalyses Endohydrolysis of (1-&gt;4)-beta-D-glucosidic linkages in cellulose, lichenin and cereal beta-D-glucans.. The protein is Endoglucanase (bglC) of Bacillus subtilis.